A 317-amino-acid chain; its full sequence is Small glutamine-rich tetratricopeptide repeat-containing protein 2 (317 aa).

4 TPR repeats span residues 14–48 (LKQA…KPEE), 83–116 (AEKL…DPTS), 118–150 (VYYS…DPHH), and 151–184 (ARAF…DPNN). Residues 198 to 215 (LNQPSDSSATSGADQART) are compositionally biased toward polar residues. Disordered stretches follow at residues 198 to 224 (LNQP…PDLG) and 298 to 317 (MNNN…PPPQ).

It belongs to the SGT family.

It localises to the cytoplasm. The protein resides in the nucleus. Functionally, co-chaperone that binds to the molecular chaperone Hsp70 and regulates Hsp70 ATPase activity. In Schizosaccharomyces pombe (strain 972 / ATCC 24843) (Fission yeast), this protein is Small glutamine-rich tetratricopeptide repeat-containing protein 2 (sgt2).